Consider the following 366-residue polypeptide: Photosynthetic reaction center cytochrome c subunit (366 aa).

Positions 1-22 (MALAVRISTLTVAVTAAALLAG) are cleaved as a signal peptide. Cysteine 23 carries the N-palmitoyl cysteine lipid modification. Cysteine 23 carries the S-diacylglycerol cysteine lipid modification. The heme site is built by methionine 94, cysteine 107, cysteine 110, histidine 111, methionine 129, histidine 143, cysteine 151, cysteine 154, histidine 155, methionine 238, cysteine 249, cysteine 252, histidine 253, cysteine 309, cysteine 312, and histidine 313.

As to quaternary structure, component of the photosynthetic reaction center composed of protein subunits L (PufL), M (PufM), H (PuhA) and cytochrome C (PufC). The reaction center interacts with light-harvesting antenna complex LH1. In terms of processing, binds 4 heme groups per subunit.

It is found in the cellular chromatophore membrane. In terms of biological role, the reaction center of purple bacteria contains a tightly bound cytochrome molecule which re-reduces the photo oxidized primary electron donor. The polypeptide is Photosynthetic reaction center cytochrome c subunit (pufC) (Rubrivivax gelatinosus (strain NBRC 100245 / IL144)).